A 252-amino-acid chain; its full sequence is MSNTSASFGFKDVDASLKAGLVRGVFDRVAKNYDIMNDLMSGGVHRLWKDAVAARLNPQPGEVIIDCAGGTGDMARRFAKMARKAQERRGGPDATINIVDYNAEMIMAGIERGGEPEITWTVGDAQRLPLPDAYADAYVISFGIRNVTDINAALREARRVLKPGGRFLCLEFSRPVTEPLAKAYDAYSFKVIPQVGEWVAKDRDAYQYLVESIRRFPDQRTFAGMIEAAGFKRVTFTNFTGGVAALHQGWAI.

S-adenosyl-L-methionine-binding positions include Thr-71, Asp-100, 124–125 (DA), and Ser-141.

The protein belongs to the class I-like SAM-binding methyltransferase superfamily. MenG/UbiE family.

The catalysed reaction is a 2-demethylmenaquinol + S-adenosyl-L-methionine = a menaquinol + S-adenosyl-L-homocysteine + H(+). The enzyme catalyses a 2-methoxy-6-(all-trans-polyprenyl)benzene-1,4-diol + S-adenosyl-L-methionine = a 5-methoxy-2-methyl-3-(all-trans-polyprenyl)benzene-1,4-diol + S-adenosyl-L-homocysteine + H(+). The protein operates within quinol/quinone metabolism; menaquinone biosynthesis; menaquinol from 1,4-dihydroxy-2-naphthoate: step 2/2. Its pathway is cofactor biosynthesis; ubiquinone biosynthesis. In terms of biological role, methyltransferase required for the conversion of demethylmenaquinol (DMKH2) to menaquinol (MKH2) and the conversion of 2-polyprenyl-6-methoxy-1,4-benzoquinol (DDMQH2) to 2-polyprenyl-3-methyl-6-methoxy-1,4-benzoquinol (DMQH2). This Caulobacter vibrioides (strain ATCC 19089 / CIP 103742 / CB 15) (Caulobacter crescentus) protein is Ubiquinone/menaquinone biosynthesis C-methyltransferase UbiE.